The following is a 381-amino-acid chain: 4-hydroxy-3-methylbut-2-en-1-yl diphosphate synthase (flavodoxin) (381 aa).

[4Fe-4S] cluster contacts are provided by C273, C276, C308, and E315.

It belongs to the IspG family. The cofactor is [4Fe-4S] cluster.

It carries out the reaction (2E)-4-hydroxy-3-methylbut-2-enyl diphosphate + oxidized [flavodoxin] + H2O + 2 H(+) = 2-C-methyl-D-erythritol 2,4-cyclic diphosphate + reduced [flavodoxin]. It participates in isoprenoid biosynthesis; isopentenyl diphosphate biosynthesis via DXP pathway; isopentenyl diphosphate from 1-deoxy-D-xylulose 5-phosphate: step 5/6. In terms of biological role, converts 2C-methyl-D-erythritol 2,4-cyclodiphosphate (ME-2,4cPP) into 1-hydroxy-2-methyl-2-(E)-butenyl 4-diphosphate. In Gluconobacter oxydans (strain 621H) (Gluconobacter suboxydans), this protein is 4-hydroxy-3-methylbut-2-en-1-yl diphosphate synthase (flavodoxin).